The sequence spans 594 residues: Bifunctional lycopene cyclase/phytoene synthase (594 aa).

A lycopene beta-cyclase region spans residues 1-249 (MGLDYLMVHV…VVFGIAAMHN (249 aa)). The next 7 membrane-spanning stretches (helical) occupy residues 3–23 (LDYL…LTIL), 35–55 (KIVL…SYLI), 77–97 (LEEV…YIIF), 130–150 (LGTL…YIGG), 153–173 (MYLG…WVLM), 176–196 (FLLA…TLYL), and 227–247 (IEEA…IAAM). The segment at 256–594 (YKAFISTTAM…RFKRAWLAML (339 aa)) is phytoene synthase.

In the N-terminal section; belongs to the lycopene beta-cyclase family. It in the C-terminal section; belongs to the phytoene/squalene synthase family.

It is found in the membrane. The catalysed reaction is all-trans-lycopene = gamma-carotene. The enzyme catalyses gamma-carotene = all-trans-beta-carotene. It catalyses the reaction 2 (2E,6E,10E)-geranylgeranyl diphosphate = 15-cis-phytoene + 2 diphosphate. It functions in the pathway carotenoid biosynthesis; beta-carotene biosynthesis. Its pathway is carotenoid biosynthesis; phytoene biosynthesis; all-trans-phytoene from geranylgeranyl diphosphate: step 1/1. Its function is as follows. Bifunctional enzyme that catalyzes the reactions from geranylgeranyl diphosphate to phytoene (phytoene synthase) and lycopene to beta-carotene via the intermediate gamma-carotene (lycopene cyclase). In Arthroderma gypseum (strain ATCC MYA-4604 / CBS 118893) (Microsporum gypseum), this protein is Bifunctional lycopene cyclase/phytoene synthase.